Consider the following 557-residue polypeptide: Dihydroxy-acid dehydratase (557 aa).

D78 serves as a coordination point for Mg(2+). C119 contributes to the [2Fe-2S] cluster binding site. The Mg(2+) site is built by D120 and K121. The residue at position 121 (K121) is an N6-carboxylysine. C191 contributes to the [2Fe-2S] cluster binding site. Mg(2+) is bound at residue E442. S468 serves as the catalytic Proton acceptor.

This sequence belongs to the IlvD/Edd family. In terms of assembly, homodimer. Requires [2Fe-2S] cluster as cofactor. It depends on Mg(2+) as a cofactor.

The enzyme catalyses (2R)-2,3-dihydroxy-3-methylbutanoate = 3-methyl-2-oxobutanoate + H2O. The catalysed reaction is (2R,3R)-2,3-dihydroxy-3-methylpentanoate = (S)-3-methyl-2-oxopentanoate + H2O. It functions in the pathway amino-acid biosynthesis; L-isoleucine biosynthesis; L-isoleucine from 2-oxobutanoate: step 3/4. Its pathway is amino-acid biosynthesis; L-valine biosynthesis; L-valine from pyruvate: step 3/4. Functionally, functions in the biosynthesis of branched-chain amino acids. Catalyzes the dehydration of (2R,3R)-2,3-dihydroxy-3-methylpentanoate (2,3-dihydroxy-3-methylvalerate) into 2-oxo-3-methylpentanoate (2-oxo-3-methylvalerate) and of (2R)-2,3-dihydroxy-3-methylbutanoate (2,3-dihydroxyisovalerate) into 2-oxo-3-methylbutanoate (2-oxoisovalerate), the penultimate precursor to L-isoleucine and L-valine, respectively. In Lachnospira eligens (strain ATCC 27750 / DSM 3376 / VPI C15-48 / C15-B4) (Eubacterium eligens), this protein is Dihydroxy-acid dehydratase.